We begin with the raw amino-acid sequence, 442 residues long: Probable 6-phospho-beta-glucosidase (442 aa).

An NAD(+)-binding site is contributed by 5–73 (LKIVTIGGGS…VPIDIHLTLD (69 aa)). Substrate contacts are provided by Arg-96 and Asn-150. Mn(2+) contacts are provided by Cys-172 and His-202. Tyr-256 acts as the Proton acceptor in catalysis.

This sequence belongs to the glycosyl hydrolase 4 family. The cofactor is NAD(+). A divalent metal cation serves as cofactor.

The enzyme catalyses 6-phospho-beta-D-glucosyl-(1-&gt;4)-D-glucose + H2O = D-glucose 6-phosphate + D-glucose. Functionally, hydrolyzes phospho-beta-glucosides. This Bacillus subtilis (strain 168) protein is Probable 6-phospho-beta-glucosidase (licH).